The following is a 58-amino-acid chain: 6.8 kDa protein (58 aa).

The sequence is that of 6.8 kDa protein from Satellite tobacco mosaic virus (STMV).